We begin with the raw amino-acid sequence, 204 residues long: Probable proteasome subunit beta type-3 (204 aa).

Belongs to the peptidase T1B family. The 26S proteasome consists of a 20S proteasome core and two 19S regulatory subunits. The 20S proteasome core is composed of 28 subunits that are arranged in four stacked rings, resulting in a barrel-shaped structure. The two end rings are each formed by seven alpha subunits, and the two central rings are each formed by seven beta subunits. The catalytic chamber with the active sites is on the inside of the barrel.

Its subcellular location is the cytoplasm. The protein resides in the nucleus. Its function is as follows. Non-catalytic component of the proteasome, a multicatalytic proteinase complex which is characterized by its ability to cleave peptides with Arg, Phe, Tyr, Leu, and Glu adjacent to the leaving group at neutral or slightly basic pH. The proteasome has an ATP-dependent proteolytic activity. The sequence is that of Probable proteasome subunit beta type-3 (pup3) from Schizosaccharomyces pombe (strain 972 / ATCC 24843) (Fission yeast).